Reading from the N-terminus, the 623-residue chain is 1-deoxy-D-xylulose-5-phosphate synthase (623 aa).

Thiamine diphosphate-binding positions include H80 and G121–S123. D152 provides a ligand contact to Mg(2+). Residues G153–A154, N181, Y289, and E372 each bind thiamine diphosphate. N181 contacts Mg(2+).

It belongs to the transketolase family. DXPS subfamily. As to quaternary structure, homodimer. Requires Mg(2+) as cofactor. It depends on thiamine diphosphate as a cofactor.

The catalysed reaction is D-glyceraldehyde 3-phosphate + pyruvate + H(+) = 1-deoxy-D-xylulose 5-phosphate + CO2. Its pathway is metabolic intermediate biosynthesis; 1-deoxy-D-xylulose 5-phosphate biosynthesis; 1-deoxy-D-xylulose 5-phosphate from D-glyceraldehyde 3-phosphate and pyruvate: step 1/1. In terms of biological role, catalyzes the acyloin condensation reaction between C atoms 2 and 3 of pyruvate and glyceraldehyde 3-phosphate to yield 1-deoxy-D-xylulose-5-phosphate (DXP). This chain is 1-deoxy-D-xylulose-5-phosphate synthase, found in Baumannia cicadellinicola subsp. Homalodisca coagulata.